We begin with the raw amino-acid sequence, 319 residues long: mRNA decay activator protein ZFP36 (319 aa).

Positions Met1 to His15 are necessary for nuclear export. The necessary and sufficient for the association with mRNA decay enzymes and mRNA decay activation stretch occupies residues Met1–Thr92. 2 necessary for localization of ARE-containing mRNAs to processing bodies (PBs) regions span residues Met1–Leu166 and Thr92–Glu319. Ser52 carries the post-translational modification Phosphoserine; by MAPKAPK2. Ser58 is modified (phosphoserine). One copy of the P-P-P-P-G repeat lies at Pro63–Gly67. A compositionally biased stretch (pro residues) spans Pro65–Thr84. Positions Pro65–Arg95 are disordered. Phosphoserine is present on residues Ser80 and Ser82. A Phosphothreonine modification is found at Thr84. At Ser85 the chain carries Phosphoserine. The segment covering Ser85 to Ser94 has biased composition (low complexity). Residues Thr87–Pro160 form a necessary for nuclear localization region. Residues Thr89–Ala165 are necessary for RNA-binding. 2 consecutive C3H1-type zinc fingers follow at residues Arg95–Gly123 and Lys133–Thr161. The tract at residues Arg95–Arg186 is necessary for interaction with PABPN1. The tract at residues Leu166–Glu319 is necessary for mRNA decay activation. Ser178 carries the phosphoserine; by MAPKAPK2 modification. Residues Phe179–Ser188 show a composition bias toward low complexity. A disordered region spans residues Phe179–Leu309. A Phosphoserine modification is found at Ser189. The stretch at Pro190–Gly194 is one P-P-P-P-G repeat. Over residues Ser196 to Ser208 the composition is skewed to low complexity. Ser210 is subject to Phosphoserine. One copy of the P-P-P-P-G repeat lies at Pro211 to Gly215. Position 220 is a phosphoserine; by MAPK1; in vitro (Ser220). Thr250 is modified (phosphothreonine). Residues Ser269, Ser289, and Ser316 each carry the phosphoserine modification. Positions Ser279 to Ser289 are enriched in low complexity. An interaction with CNOT1 region spans residues Pro305–Glu319.

In terms of assembly, associates with cytoplasmic CCR4-NOT and PAN2-PAN3 deadenylase complexes to trigger ARE-containing mRNA deadenylation and decay processes. Part of a mRNA decay activation complex at least composed of poly(A)-specific exoribonucleases CNOT6, EXOSC2 and XRN1 and mRNA-decapping enzymes DCP1A and DCP2. Associates with the RNA exosome complex. Interacts (via phosphorylated form) with 14-3-3 proteins; these interactions promote exclusion of ZFP36 from cytoplasmic stress granules in response to arsenite treatment in a MAPKAPK2-dependent manner and does not prevent CCR4-NOT deadenylase complex recruitment or ZFP36-induced ARE-containing mRNA deadenylation and decay processes. Interacts with 14-3-3 proteins; these interactions occur in response to rapamycin in an Akt-dependent manner. Interacts with AGO2 and AGO4. Interacts (via C-terminus) with CNOT1; this interaction occurs in a RNA-independent manner and induces mRNA deadenylation. Interacts (via N-terminus) with CNOT6. Interacts with CNOT6L. Interacts (via C-terminus) with CNOT7; this interaction occurs in a RNA-independent manner, induces mRNA deadenylation and is inhibited in a phosphorylation MAPKAPK2-dependent manner. Interacts (via unphosphorylated form) with CNOT8; this interaction occurs in a RNA-independent manner and is inhibited in a phosphorylation MAPKAPK2-dependent manner. Interacts with DCP1A. Interacts (via N-terminus) with DCP2. Interacts with EDC3. Interacts (via N-terminus) with EXOSC2. Interacts with heat shock 70 kDa proteins. Interacts with KHSRP; this interaction increases upon cytokine-induced treatment. Interacts with MAP3K4; this interaction enhances the association with SH3KBP1/CIN85. Interacts with MAPKAPK2; this interaction occurs upon skeletal muscle satellite cell activation. Interacts with NCL. Interacts with NUP214; this interaction increases upon lipopolysaccharide (LPS) stimulation. Interacts with PABPC1; this interaction occurs in a RNA-dependent manner. Interacts (via hypophosphorylated form) with PABPN1 (via RRM domain and C-terminal arginine-rich region); this interaction occurs in the nucleus in a RNA-independent manner, decreases in presence of single-stranded poly(A) RNA-oligomer and in a p38 MAPK-dependent-manner and inhibits nuclear poly(A) tail synthesis. Interacts with PAN2. Interacts (via C3H1-type zinc finger domains) with PKM. Interacts (via C3H1-type zinc finger domains) with nuclear RNA poly(A) polymerase. Interacts with PPP2CA; this interaction occurs in LPS-stimulated cells and induces ZFP36 dephosphorylation, and hence may promote ARE-containing mRNAs decay. Interacts (via C-terminus) with PRR5L (via C-terminus); this interaction may accelerate ZFP36-mediated mRNA decay during stress. Interacts (via C-terminus) with SFN; this interaction occurs in a phosphorylation-dependent manner. Interacts (via extreme C-terminal region) with SH3KBP1/CIN85 (via SH3 domains); this interaction enhances MAP3K4-induced phosphorylation of ZFP36 at Ser-58 and Ser-85 and does not alter neither ZFP36 binding to ARE-containing transcripts nor TNF-alpha mRNA decay. Interacts with XRN1. Interacts (via C-terminus and Ser-178 phosphorylated form) with YWHAB; this interaction occurs in a p38/MAPKAPK2-dependent manner, increases cytoplasmic localization of ZFP36 and protects ZFP36 from Ser-178 dephosphorylation by serine/threonine phosphatase 2A, and hence may be crucial for stabilizing ARE-containing mRNAs. Interacts (via phosphorylated form) with YWHAE. Interacts (via C-terminus) with YWHAG; this interaction occurs in a phosphorylation-dependent manner. Interacts with YWHAH; this interaction occurs in a phosphorylation-dependent manner. Interacts with YWHAQ; this interaction occurs in a phosphorylation-dependent manner. Interacts with (via C-terminus) YWHAZ; this interaction occurs in a phosphorylation-dependent manner. Does not interact with SH3KBP1. Interacts (via the 4EHP-binding motif) with EIF4E2; the interaction is direct. Interacts (via P-P-P-P-G repeats) with GIGYF2; the interaction is direct. Phosphorylated. Phosphorylation at serine and/or threonine residues occurs in a p38 MAPK- and MAPKAPK2-dependent manner. Phosphorylated by MAPKAPK2 at Ser-52 and Ser-178; phosphorylation increases its stability and cytoplasmic localization, promotes binding to 14-3-3 adapter proteins and inhibits the recruitment of cytoplasmic CCR4-NOT and PAN2-PAN3 deadenylase complexes to the mRNA decay machinery, thereby inhibiting ZFP36-induced ARE-containing mRNA deadenylation and decay processes. Phosphorylation by MAPKAPK2 does not impair ARE-containing RNA-binding. Phosphorylated in a MAPKAPK2- and p38 MAPK-dependent manner upon skeletal muscle satellite cell activation; this phosphorylation inhibits ZFP36-mediated mRNA decay activity, and hence stabilizes MYOD1 mRNA. Phosphorylated by MAPK1 upon mitogen stimulation. Phosphorylated at Ser-58 and Ser-85; these phosphorylations increase in a SH3KBP1-dependent manner. Phosphorylated at serine and threonine residues in a pyruvate kinase PKM- and p38 MAPK-dependent manner. Phosphorylation at Ser-52 may participate in the PKM-mediated degradation of ZFP36 in a p38 MAPK-dependent manner. Dephosphorylated by serine/threonine phosphatase 2A at Ser-178. In terms of processing, ubiquitinated; pyruvate kinase (PKM)-dependent ubiquitination leads to proteasomal degradation through a p38 MAPK signaling pathway. In terms of tissue distribution, expressed in skeletal muscle satellite cells. Strongly expressed in differentiated adipocytes compared to preadipocytes (at protein level). Expressed in embryonic stem cells (ESCs). Expressed in heart, placenta, kidney, intestine, liver, lung, thymus, fat and spleen.

The protein resides in the nucleus. Its subcellular location is the cytoplasm. It is found in the cytoplasmic granule. The protein localises to the P-body. Functionally, zinc-finger RNA-binding protein that destabilizes numerous cytoplasmic AU-rich element (ARE)-containing mRNA transcripts by promoting their poly(A) tail removal or deadenylation, and hence provide a mechanism for attenuating protein synthesis. Acts as an 3'-untranslated region (UTR) ARE mRNA-binding adapter protein to communicate signaling events to the mRNA decay machinery. Recruits deadenylase CNOT7 (and probably the CCR4-NOT complex) via association with CNOT1, and hence promotes ARE-mediated mRNA deadenylation. Also functions by recruiting components of the cytoplasmic RNA decay machinery to the bound ARE-containing mRNAs. Self-regulates by destabilizing its own mRNA. Binds to 3'-UTR ARE of numerous mRNAs and of its own mRNA. Plays a role in anti-inflammatory responses; suppresses tumor necrosis factor (TNF)-alpha production by stimulating ARE-mediated TNF-alpha mRNA decay and several other inflammatory ARE-containing mRNAs in interferon (IFN)- and/or lipopolysaccharide (LPS)-induced macrophages. Also plays a role in the regulation of dendritic cell maturation at the post-transcriptional level, and hence operates as part of a negative feedback loop to limit the inflammatory response. Promotes ARE-mediated mRNA decay of hypoxia-inducible factor HIF1A mRNA during the response of endothelial cells to hypoxia. Positively regulates early adipogenesis of preadipocytes by promoting ARE-mediated mRNA decay of immediate early genes (IEGs). Negatively regulates hematopoietic/erythroid cell differentiation by promoting ARE-mediated mRNA decay of the transcription factor STAT5B mRNA. Plays a role in maintaining skeletal muscle satellite cell quiescence by promoting ARE-mediated mRNA decay of the myogenic determination factor MYOD1 mRNA. Also associates with and regulates the expression of non-ARE-containing target mRNAs at the post-transcriptional level, such as MHC class I mRNAs. Participates in association with argonaute RISC catalytic components in the ARE-mediated mRNA decay mechanism; assists microRNA (miRNA) targeting ARE-containing mRNAs. May also play a role in the regulation of cytoplasmic mRNA decapping; enhances decapping of ARE-containing RNAs, in vitro. Involved in the delivery of target ARE-mRNAs to processing bodies (PBs). In addition to its cytosolic mRNA-decay function, affects nuclear pre-mRNA processing. Negatively regulates nuclear poly(A)-binding protein PABPN1-stimulated polyadenylation activity on ARE-containing pre-mRNA during LPS-stimulated macrophages. Also involved in the regulation of stress granule (SG) and P-body (PB) formation and fusion. Plays a role in the regulation of keratinocyte proliferation, differentiation and apoptosis. Plays a role as a tumor suppressor by inhibiting cell proliferation in breast cancer cells. The sequence is that of mRNA decay activator protein ZFP36 from Mus musculus (Mouse).